Here is a 360-residue protein sequence, read N- to C-terminus: GTP 3',8-cyclase 2 (360 aa).

A Radical SAM core domain is found at 33–259 (TFGRVANDLR…PDPAPRGSAP (227 aa)). R42 contributes to the GTP binding site. The [4Fe-4S] cluster site is built by C49 and C53. Y55 serves as a coordination point for S-adenosyl-L-methionine. A [4Fe-4S] cluster-binding site is contributed by C56. R93 is a binding site for GTP. Position 97 (G97) interacts with S-adenosyl-L-methionine. T124 serves as a coordination point for GTP. S148 provides a ligand contact to S-adenosyl-L-methionine. K185 is a GTP binding site. M219 contacts S-adenosyl-L-methionine. 2 residues coordinate [4Fe-4S] cluster: C287 and C290. 292-294 (RTR) contacts GTP. C304 is a [4Fe-4S] cluster binding site.

Belongs to the radical SAM superfamily. MoaA family. Monomer and homodimer. It depends on [4Fe-4S] cluster as a cofactor.

The catalysed reaction is GTP + AH2 + S-adenosyl-L-methionine = (8S)-3',8-cyclo-7,8-dihydroguanosine 5'-triphosphate + 5'-deoxyadenosine + L-methionine + A + H(+). It participates in cofactor biosynthesis; molybdopterin biosynthesis. Its function is as follows. Catalyzes the cyclization of GTP to (8S)-3',8-cyclo-7,8-dihydroguanosine 5'-triphosphate. This chain is GTP 3',8-cyclase 2, found in Mycobacterium bovis (strain ATCC BAA-935 / AF2122/97).